We begin with the raw amino-acid sequence, 221 residues long: Eukaryotic translation initiation factor 3 subunit K (221 aa).

The region spanning 46–215 (YDLEANLACL…EKIEFDNLAP (170 aa)) is the PCI domain.

This sequence belongs to the eIF-3 subunit K family. In terms of assembly, component of the eukaryotic translation initiation factor 3 (eIF-3) complex.

The protein localises to the cytoplasm. Its function is as follows. Component of the eukaryotic translation initiation factor 3 (eIF-3) complex, which is involved in protein synthesis of a specialized repertoire of mRNAs and, together with other initiation factors, stimulates binding of mRNA and methionyl-tRNAi to the 40S ribosome. The eIF-3 complex specifically targets and initiates translation of a subset of mRNAs involved in cell proliferation. In Anopheles gambiae (African malaria mosquito), this protein is Eukaryotic translation initiation factor 3 subunit K.